Reading from the N-terminus, the 467-residue chain is Indoleacetamide hydrolase (467 aa).

Active-site charge relay system residues include K74 and S149. The Acyl-ester intermediate role is filled by S173.

The protein belongs to the amidase family.

Its pathway is plant hormone metabolism; auxin biosynthesis. Functionally, hydrolyzes indole-3-acetamide (IAM) into indole-3-acetic acid (IAA). This Rhizobium radiobacter (Agrobacterium tumefaciens) protein is Indoleacetamide hydrolase (tms2).